The primary structure comprises 472 residues: Arabinose-proton symporter (472 aa).

Residues 1–29 (MVTINTESALTPRSLRDTRRMNMFVSVAA) are Cytoplasmic-facing. Residues 30–50 (AVAGLLFGLDIGVIAGALPFI) form a helical membrane-spanning segment. The Periplasmic portion of the chain corresponds to 51 to 63 (TDHFVLTSRLQEW). A helical membrane pass occupies residues 64–84 (VVSSMMLGAAIGALFNGWLSF). Residues 85-91 (RLGRKYS) are Cytoplasmic-facing. Residues 92-112 (LMAGAILFVLGSIGSAFATSV) form a helical membrane-spanning segment. At 113–114 (EM) the chain is on the periplasmic side. Residues 115–135 (LIAARVVLGIAVGIASYTAPL) form a helical membrane-spanning segment. Over 136-154 (YLSEMASENVRGKMISMYQ) the chain is Cytoplasmic. Residues 155–175 (LMVTLGIVLAFLSDTAFSYSG) form a helical membrane-spanning segment. The Periplasmic segment spans residues 176 to 178 (NWR). The chain crosses the membrane as a helical span at residues 179-199 (AMLGVLALPAVLLIILVVFLP). At 200 to 257 (NSPRWLAEKGRHIEAEEVLRMLRDTSEKAREELNEIRESLKLKQGGWALFKINRNVRR) the chain is on the cytoplasmic side. The helical transmembrane segment at 258-278 (AVFLGMLLQAMQQFTGMNIIM) threads the bilayer. The Periplasmic portion of the chain corresponds to 279–297 (YYAPRIFKMAGFTTTEQQM). Residues 298–318 (IATLVVGLTFMFATFIAVFTV) traverse the membrane as a helical segment. Over 319-325 (DKAGRKP) the chain is Cytoplasmic. Residues 326–346 (ALKIGFSVMALGTLVLGYCLM) form a helical membrane-spanning segment. Topologically, residues 347 to 361 (QFDNGTASSGLSWLS) are periplasmic. A helical transmembrane segment spans residues 362-382 (VGMTMMCIAGYAMSAAPVVWI). At 383-404 (LCSEIQPLKCRDFGITCSTTTN) the chain is on the cytoplasmic side. The next 2 helical transmembrane spans lie at 405 to 425 (WVSN…IGAA) and 426 to 446 (GTFW…FWLI). Over 447-472 (PETKNVTLEHIERKLMAGEKLRNIGV) the chain is Cytoplasmic.

It belongs to the major facilitator superfamily. Sugar transporter (TC 2.A.1.1) family.

The protein localises to the cell inner membrane. It catalyses the reaction L-arabinose(in) + H(+)(in) = L-arabinose(out) + H(+)(out). In terms of biological role, uptake of L-arabinose across the cytoplasmic membrane with the concomitant transport of protons into the cell (symport system). The sequence is that of Arabinose-proton symporter (araE) from Escherichia coli O157:H7.